A 229-amino-acid chain; its full sequence is Demethylmenaquinone methyltransferase (229 aa).

S-adenosyl-L-methionine contacts are provided by residues Thr-57, Asp-77, and 101 to 102 (DV).

It belongs to the class I-like SAM-binding methyltransferase superfamily. MenG/UbiE family.

The enzyme catalyses a 2-demethylmenaquinol + S-adenosyl-L-methionine = a menaquinol + S-adenosyl-L-homocysteine + H(+). The protein operates within quinol/quinone metabolism; menaquinone biosynthesis; menaquinol from 1,4-dihydroxy-2-naphthoate: step 2/2. In terms of biological role, methyltransferase required for the conversion of demethylmenaquinol (DMKH2) to menaquinol (MKH2). The polypeptide is Demethylmenaquinone methyltransferase (Chlamydia trachomatis serovar L2 (strain ATCC VR-902B / DSM 19102 / 434/Bu)).